The primary structure comprises 392 residues: MRYVTAGESHGPEEIAVIEGIPAGLHISQEDVNEQLARRQRGYGRGERQKIETDTVTFLTGVRHQTTLGSPITLNVHNDDHNNWSKIMAPNEPATAENTLRKVLRPRPGHADLVGGMKYRHREDLRNVLERSSARETTMRVAVGAVAKKLLSEIGVDVHGFVVNVGPAKSDLNELTKYKNLQELRVVTEGFDTRALNAEADEAIKEVIDKTKRDANTVGGQVQVIATGMPVGLGSYVSADTKLDAKIANAIVGINAFKGVQFGGGFDNAEKYGDQVMDEIFWDEERGFYRGSDNLGGFEGGMTTGEAIVVRGVVKPIPTLYRPMQSVDIDTHEDHRASIERSDTTAVTAAAVIAEAMVAIELAKAVLDKFDADNIERMKEQVAVYREEIRKF.

Arg39 and Arg45 together coordinate NADP(+). Residues 131–133 (RSS), 255–256 (NA), Gly300, 315–319 (KPIPT), and Arg341 contribute to the FMN site.

This sequence belongs to the chorismate synthase family. In terms of assembly, homotetramer. FMNH2 serves as cofactor.

It catalyses the reaction 5-O-(1-carboxyvinyl)-3-phosphoshikimate = chorismate + phosphate. The protein operates within metabolic intermediate biosynthesis; chorismate biosynthesis; chorismate from D-erythrose 4-phosphate and phosphoenolpyruvate: step 7/7. Functionally, catalyzes the anti-1,4-elimination of the C-3 phosphate and the C-6 proR hydrogen from 5-enolpyruvylshikimate-3-phosphate (EPSP) to yield chorismate, which is the branch point compound that serves as the starting substrate for the three terminal pathways of aromatic amino acid biosynthesis. This reaction introduces a second double bond into the aromatic ring system. This Leuconostoc mesenteroides subsp. mesenteroides (strain ATCC 8293 / DSM 20343 / BCRC 11652 / CCM 1803 / JCM 6124 / NCDO 523 / NBRC 100496 / NCIMB 8023 / NCTC 12954 / NRRL B-1118 / 37Y) protein is Chorismate synthase.